The chain runs to 314 residues: NF-kappa-B inhibitor alpha (314 aa).

The disordered stretch occupies residues 1 to 39 (MFQPAGHGQDWAMEGPRDGLKKERLVDDRHDSGLDSMKD). Residues 15-39 (GPRDGLKKERLVDDRHDSGLDSMKD) are compositionally biased toward basic and acidic residues. Residue Lys21 forms a Glycyl lysine isopeptide (Lys-Gly) (interchain with G-Cter in SUMO); alternate linkage. Residue Lys21 forms a Glycyl lysine isopeptide (Lys-Gly) (interchain with G-Cter in ubiquitin); alternate linkage. Residue Lys22 forms a Glycyl lysine isopeptide (Lys-Gly) (interchain with G-Cter in ubiquitin) linkage. The Destruction motif motif lies at 30-36 (HDSGLDS). Phosphoserine; by IKKA and IKKB is present on Ser32. Ser36 is modified (phosphoserine; by IKKA, IKKB, IKKE and TBK1). Tyr42 carries the post-translational modification Phosphotyrosine; by Tyr-kinases. The Nuclear export signal signature appears at 45-54 (MVKELREIRL). The Nuclear import signal signature appears at 110–120 (LQQTPLHLAVI). 4 ANK repeats span residues 110-139 (LQQT…DPEL), 143-172 (RGNT…PQHL), 182-211 (NGHT…DVNA), and 216-245 (NGRT…DVNR). (3S)-3-hydroxyasparagine; by HIF1AN is present on residues Asn210 and Asn244. Residues Ser283 and Ser288 each carry the phosphoserine; by CK2 modification. At Thr291 the chain carries Phosphothreonine; by CK2. Phosphoserine; by CK2 is present on Ser293. A Phosphothreonine modification is found at Thr296.

It belongs to the NF-kappa-B inhibitor family. As to quaternary structure, interacts with RELA; the interaction requires the nuclear import signal. Part of a 70-90 kDa complex at least consisting of CHUK, IKBKB, NFKBIA, RELA, ELP1 and MAP3K14. Interacts with NKIRAS1 and NKIRAS2. Interacts with RWDD3; the interaction enhances sumoylation. Interacts with PRMT2. Interacts with PRKACA in platelets; this interaction is disrupted by thrombin and collagen. Interacts with MEFV. Interacts with DDRGK1; positively regulates NFKBIA phosphorylation and degradation. Interacts with HNRNPA2B1; the interaction may be mediated by the RRM2 domain of HNRNPA2B1, and HNRNPA2B1 may interact simultaneously with FAM76B and either NFKBIA or NFKBIE to form a complex. Post-translationally, phosphorylated at Ser-32 and Ser-36 by IKKA/CHUK and IKKB/IKBKB; disables inhibition of NF-kappa-B DNA-binding activity. Phosphorylation at positions 32 and 36 is prerequisite to recognition by the SCF(FBXW11) and SCF(BTRC) complexes, leading to polyubiquitination and subsequent degradation. Polyubiquitinated at Lys-21 and/or Lys-22 following phosphorylation at Ser-32 and Ser-36. Monoubiquitinated at Lys-21 and/or Lys-22 by UBE2D3. Ubiquitin chain elongation is then performed by CDC34 in cooperation with the SCF(FBXW11) E3 ligase complex, building ubiquitin chains from the UBE2D3-primed NFKBIA-linked ubiquitin. The resulting polyubiquitination leads to protein degradation. Also ubiquitinated by the SCF(BTRC) complex following stimulus-dependent phosphorylation at Ser-32 and Ser-36. Deubiquitinated by USP38, leading to NF-kappa-B inhibition. In terms of processing, sumoylated; sumoylation requires the presence of the nuclear import signal. Sumoylation blocks ubiquitination and proteasome-mediated degradation of the protein thereby increasing the protein stability. Post-translationally, hydroxylated by HIF1AN.

The protein localises to the cytoplasm. Its subcellular location is the nucleus. In terms of biological role, inhibits the activity of dimeric NF-kappa-B/REL complexes by trapping REL (RELA/p65 and NFKB1/p50) dimers in the cytoplasm by masking their nuclear localization signals. On cellular stimulation by immune and pro-inflammatory responses, becomes phosphorylated promoting ubiquitination and degradation, enabling the dimeric RELA to translocate to the nucleus and activate transcription. The sequence is that of NF-kappa-B inhibitor alpha (Nfkbia) from Rattus norvegicus (Rat).